A 195-amino-acid polypeptide reads, in one-letter code: MRLCDTDIERYLDDGIISLTPRPNNDKINGATIDVRLGNSFRVFREHSAPFIDLSGPKEEVSAQLESVMSDEILIPEGEAFFLHPGTLALATTLESVKLPANIIGWLDGRSSLARLGLMVHVTAHRIDPGWEGKIVLEFYNSGKLPLALRPNMVIGALSFEVLSGEAKRPYSSRKDAKYKNQQSAVASRIDEDKE.

DCTP contacts are provided by residues 110–115 (RSSLAR), Asp-128, 136–138 (VLE), Tyr-171, Lys-178, and Gln-182. Glu-138 functions as the Proton donor/acceptor in the catalytic mechanism. The segment covering 169–179 (RPYSSRKDAKY) has biased composition (basic and acidic residues). Positions 169–195 (RPYSSRKDAKYKNQQSAVASRIDEDKE) are disordered.

The protein belongs to the dCTP deaminase family. As to quaternary structure, homotrimer.

The catalysed reaction is dCTP + H2O + H(+) = dUTP + NH4(+). The protein operates within pyrimidine metabolism; dUMP biosynthesis; dUMP from dCTP (dUTP route): step 1/2. In terms of biological role, catalyzes the deamination of dCTP to dUTP. The chain is dCTP deaminase from Haemophilus influenzae (strain 86-028NP).